The primary structure comprises 258 residues: Spindlin-3 (258 aa).

Residues 1–23 (MKTPFGKAAAGQRSRTGAGHGSV) form a disordered region. Tudor-like domain stretches follow at residues 50–99 (VGCR…LELH), 129–178 (VGKA…YQLL), and 210–255 (VGKQ…YDLV). 2 histone H3K4me3 and H3R8me2a binding regions span residues Glu138 and 246-248 (DFH).

Belongs to the SPIN/STSY family. As to quaternary structure, interacts with C11orf84/SPINDOC.

Exhibits H3K4me3-binding activity. The polypeptide is Spindlin-3 (SPIN3) (Pongo abelii (Sumatran orangutan)).